A 101-amino-acid polypeptide reads, in one-letter code: Small ribosomal subunit protein bS18c (101 aa).

The protein belongs to the bacterial ribosomal protein bS18 family. In terms of assembly, part of the 30S ribosomal subunit.

It is found in the plastid. The protein localises to the chloroplast. The sequence is that of Small ribosomal subunit protein bS18c from Aethionema grandiflorum (Persian stone-cress).